The primary structure comprises 420 residues: LanC-like protein 3 homolog (420 aa).

The protein belongs to the LanC-like protein family.

The protein is LanC-like protein 3 homolog of Drosophila pseudoobscura pseudoobscura (Fruit fly).